The primary structure comprises 215 residues: MKAFTQHTGLVAPLDRANVDTDQIIPKQFLKSIKRTGFGPNLFDEWRYLDVGQPGQDCSARPLNTGFVLNLPRYQGASVLLARENFGCGSSREHAPWALDEYGFRTVIAPSFADIFFNNSFKNGLLPIILPEAEVDELFRQCESTEGYRLTVDLAAQTVTRPDGKALSFEIDPFRKHCLLNGLDDIGLTLRDADAIRVFEEKHRQASPWLFGAIK.

Belongs to the LeuD family. LeuD type 1 subfamily. As to quaternary structure, heterodimer of LeuC and LeuD.

The enzyme catalyses (2R,3S)-3-isopropylmalate = (2S)-2-isopropylmalate. It participates in amino-acid biosynthesis; L-leucine biosynthesis; L-leucine from 3-methyl-2-oxobutanoate: step 2/4. Catalyzes the isomerization between 2-isopropylmalate and 3-isopropylmalate, via the formation of 2-isopropylmaleate. The polypeptide is 3-isopropylmalate dehydratase small subunit (leuD) (Azotobacter vinelandii).